The following is a 480-amino-acid chain: Probable cobyric acid synthase (480 aa).

In terms of domain architecture, GATase cobBQ-type spans 246-431; sequence PVRIAVIRLP…MHGLFLNPSA (186 aa). Residue cysteine 325 is the Nucleophile of the active site. Histidine 423 is an active-site residue.

It belongs to the CobB/CobQ family. CobQ subfamily.

It participates in cofactor biosynthesis; adenosylcobalamin biosynthesis. Its function is as follows. Catalyzes amidations at positions B, D, E, and G on adenosylcobyrinic A,C-diamide. NH(2) groups are provided by glutamine, and one molecule of ATP is hydrogenolyzed for each amidation. In Methanoregula boonei (strain DSM 21154 / JCM 14090 / 6A8), this protein is Probable cobyric acid synthase.